Consider the following 760-residue polypeptide: Serine/threonine-protein kinase dkf-1 (760 aa).

2 consecutive Phorbol-ester/DAG-type zinc fingers follow at residues 103 to 153 (PHVV…GIIV) and 194 to 244 (PHTL…PSNC). Residues 316–444 (KNLEGWMIHF…QFIKESLQPP (129 aa)) enclose the PH domain. Residues 464-725 (VLSDKTLGSG…IEKCLEHGWL (262 aa)) enclose the Protein kinase domain. ATP-binding positions include 470–478 (LGSGQFGTV) and lysine 493. The active-site Proton acceptor is the aspartate 589. Residue threonine 626 is modified to Phosphothreonine.

It belongs to the protein kinase superfamily. CAMK Ser/Thr protein kinase family. PKD subfamily. The cofactor is Mg(2+). Post-translationally, prolonged phosphorylation at Thr-626 results in ubiquitination and degradation.

Its subcellular location is the cytoplasm. The protein localises to the membrane. It carries out the reaction L-seryl-[protein] + ATP = O-phospho-L-seryl-[protein] + ADP + H(+). It catalyses the reaction L-threonyl-[protein] + ATP = O-phospho-L-threonyl-[protein] + ADP + H(+). Its activity is regulated as follows. Activated by DAG and phorbol esters. Phorbol-ester/DAG-type domain 1 binds phorbol ester with high affinity and mediates accumulation at the cell periphery. Phorbol-ester/DAG-type domain 2 binds phorbol ester with low affinity but may mediate initial contact, resulting in a conformational change allowing previously occluded domain 1 to anchor the kinase. Phosphorylation on Thr-626 is then also required for activation and may also result in a further conformational change. Its function is as follows. Converts transient diacylglycerol (DAG) signals into prolonged physiological effects, independently of PKC. Role in the regulation of growth and neuromuscular control of movement. Involved in immune response to S.aureus bacterium by activating transcription factor hlh-30 downstream of phospholipase plc-1. This is Serine/threonine-protein kinase dkf-1 from Caenorhabditis briggsae.